The sequence spans 199 residues: Potassium-transporting ATPase KdpC subunit (199 aa).

A helical membrane pass occupies residues 7–27 (PAIVLLLALTLLTGLAYPLAM). Residues 67-86 (HGRPSATTAADPQDSSKTVP) are disordered. Over residues 71-84 (SATTAADPQDSSKT) the composition is skewed to polar residues.

It belongs to the KdpC family. As to quaternary structure, the system is composed of three essential subunits: KdpA, KdpB and KdpC.

The protein localises to the cell inner membrane. Functionally, part of the high-affinity ATP-driven potassium transport (or Kdp) system, which catalyzes the hydrolysis of ATP coupled with the electrogenic transport of potassium into the cytoplasm. This subunit acts as a catalytic chaperone that increases the ATP-binding affinity of the ATP-hydrolyzing subunit KdpB by the formation of a transient KdpB/KdpC/ATP ternary complex. The sequence is that of Potassium-transporting ATPase KdpC subunit from Rhodopseudomonas palustris (strain BisB18).